The sequence spans 60 residues: Large ribosomal subunit protein bL32 (60 aa).

Positions 1–21 are disordered; it reads MAVPRNRHSNARKNIRRSHDA.

Belongs to the bacterial ribosomal protein bL32 family.

This chain is Large ribosomal subunit protein bL32, found in Chlamydia felis (strain Fe/C-56) (Chlamydophila felis).